The primary structure comprises 343 residues: Dihydroorotate dehydrogenase (quinone) (343 aa).

FMN contacts are provided by residues 61 to 65 and Thr85; that span reads AGLDK. Residue Lys65 coordinates substrate. A substrate-binding site is contributed by 110 to 114; that stretch reads NRMGF. The FMN site is built by Asn138 and Asn171. Position 171 (Asn171) interacts with substrate. Ser174 acts as the Nucleophile in catalysis. Asn176 is a substrate binding site. FMN contacts are provided by Lys216 and Thr244. Residue 245-246 participates in substrate binding; that stretch reads NT. FMN contacts are provided by residues Gly267, Gly296, and 317–318; that span reads YS.

Belongs to the dihydroorotate dehydrogenase family. Type 2 subfamily. As to quaternary structure, monomer. FMN serves as cofactor.

The protein resides in the cell membrane. It catalyses the reaction (S)-dihydroorotate + a quinone = orotate + a quinol. It functions in the pathway pyrimidine metabolism; UMP biosynthesis via de novo pathway; orotate from (S)-dihydroorotate (quinone route): step 1/1. Functionally, catalyzes the conversion of dihydroorotate to orotate with quinone as electron acceptor. This chain is Dihydroorotate dehydrogenase (quinone), found in Pseudomonas savastanoi pv. phaseolicola (strain 1448A / Race 6) (Pseudomonas syringae pv. phaseolicola (strain 1448A / Race 6)).